The primary structure comprises 226 residues: E3 ubiquitin-protein ligase RNF186 (226 aa).

The segment at 39-85 adopts an RING-type zinc-finger fold; that stretch reads CLVCREPYNCARSPKLLSCQHTFCAVCLKLLLYVQEDTWSIPCPLCR. A run of 2 helical transmembrane segments spans residues 157–177 and 179–199; these read HLLL…PGVI and WVLA…CCHP.

As to quaternary structure, interacts with BNIP1. Polyubiquitinated. 'Lys-29'-linked autoubiquitination leads to proteasomal degradation.

Its subcellular location is the endoplasmic reticulum membrane. The enzyme catalyses S-ubiquitinyl-[E2 ubiquitin-conjugating enzyme]-L-cysteine + [acceptor protein]-L-lysine = [E2 ubiquitin-conjugating enzyme]-L-cysteine + N(6)-ubiquitinyl-[acceptor protein]-L-lysine.. It participates in protein modification; protein ubiquitination. E3 ubiquitin protein ligase that is part of an apoptotic signaling pathway activated by endoplasmic reticulum stress. Stimulates the expression of proteins specific of the unfolded protein response (UPR), ubiquitinates BNIP1 and regulates its localization to the mitochondrion and induces calcium release from the endoplasmic reticulum that ultimately leads to cell apoptosis. Plays a role in the maintenance of intestinal homeostasis and clearance of enteric pathogens. Upon NOD2 stimulation, ubiquitinates the ER stress sensor activating transcription factor 6/ATF6 and promotes the unfolded protein response UPR. Participates in basal level of autophagy maintenance by regulating the ubiquitination of EPHB2. Upon stimulation by ligand EFNB1, ubiquitinates EPHB2 and further recruits MAP1LC3B for autophagy induction. Controls nutrient sensing by ubiquitinating Sestrin-2/SESN2, which is an intracellular sensor of cytosolic leucine and inhibitor of mTORC1 activity. This chain is E3 ubiquitin-protein ligase RNF186, found in Mus musculus (Mouse).